Reading from the N-terminus, the 235-residue chain is Chalcone--flavanone isomerase 1 (235 aa).

T50 and S192 together coordinate substrate.

Belongs to the chalcone isomerase family.

The catalysed reaction is a chalcone = a flavanone.. Its pathway is secondary metabolite biosynthesis; flavonoid biosynthesis. Functionally, catalyzes the intramolecular cyclization of bicyclic chalcones into tricyclic (S)-flavanones. Responsible for the isomerization of 4,2',4',6'-tetrahydroxychalcone (also termed chalcone) into naringenin. The chain is Chalcone--flavanone isomerase 1 (CHI1) from Chrysanthemum morifolium (Florist's daisy).